The chain runs to 877 residues: Probable Ras GTPase-activating-like protein ngap (877 aa).

Positions 72 to 218 (TPSATYESLI…KDQKERELWF (147 aa)) constitute a C2 domain. A disordered region spans residues 350–456 (SDDGDISGLK…ETINLSSSIN (107 aa)). The segment covering 389–409 (TTATTTPSSTPSTPISPSSQS) has biased composition (low complexity). A compositionally biased stretch (polar residues) spans 410-425 (NNIKTPDSKTRSSSNA). 2 stretches are compositionally biased toward low complexity: residues 426–438 (STNT…KSTG) and 447–456 (ETINLSSSIN). The region spanning 591 to 802 (GKCLYLLKSL…ENMKSFINTL (212 aa)) is the Ras-GAP domain. Residues 820–848 (LEKELACLYRHLIKQRQDMAEEMESTESE) adopt a coiled-coil conformation.

Functionally, may function as a Ras GTPase-activating protein. The protein is Probable Ras GTPase-activating-like protein ngap (ngap) of Dictyostelium discoideum (Social amoeba).